Consider the following 373-residue polypeptide: Envelope glycoprotein C homolog (373 aa).

An N-terminal signal peptide occupies residues 1–25; that stretch reads MVSNMRSTRTALTGWVGIFLVLSLQ. The tract at residues 58 to 93 is disordered; the sequence is EVPNSPTTELSTTVATKTAVPTTESTSSSEAHRNSS. Residues 59 to 68 are compositionally biased toward polar residues; that stretch reads VPNSPTTELS. The span at 69-80 shows a compositional bias: low complexity; that stretch reads TTVATKTAVPTT. N-linked (GlcNAc...) asparagine; by host glycosylation is found at Asn91, Asn111, Asn203, and Asn345. In terms of domain architecture, Ig-like spans 249 to 347; that stretch reads PASVDVLAPP…GDMISTSNAT (99 aa).

This sequence belongs to the herpesviridae glycoprotein C family.

The protein is Envelope glycoprotein C homolog (gC) of Gallus gallus (Chicken).